The chain runs to 422 residues: Ornithine decarboxylase (422 aa).

Position 71 is an N6-(pyridoxal phosphate)lysine (K71). Pyridoxal 5'-phosphate-binding positions include S203, G240, and 275–278 (EPGR). 331 to 332 (FD) provides a ligand contact to substrate. C359 acts as the Proton donor; shared with dimeric partner in catalysis. D360 contributes to the substrate binding site. Residue Y388 participates in pyridoxal 5'-phosphate binding.

The protein belongs to the Orn/Lys/Arg decarboxylase class-II family. Homodimer. Only the dimer is catalytically active, as the active sites are constructed of residues from both monomers. It depends on pyridoxal 5'-phosphate as a cofactor.

The enzyme catalyses L-ornithine + H(+) = putrescine + CO2. Its pathway is amine and polyamine biosynthesis; putrescine biosynthesis via L-ornithine pathway; putrescine from L-ornithine: step 1/1. With respect to regulation, inhibited by antizyme (AZ) in response to polyamine levels. AZ inhibits the assembly of the functional homodimer by binding to ODC monomers and targeting them for ubiquitin-independent proteolytic destruction by the 26S proteasome. In terms of biological role, catalyzes the first and rate-limiting step of polyamine biosynthesis that converts ornithine into putrescine, which is the precursor for the polyamines, spermidine and spermine. Polyamines are essential for cell proliferation and are implicated in cellular processes, ranging from DNA replication to apoptosis. This is Ornithine decarboxylase from Caenorhabditis elegans.